The following is a 179-amino-acid chain: Large ribosomal subunit protein uL6 (179 aa).

Belongs to the universal ribosomal protein uL6 family. In terms of assembly, part of the 50S ribosomal subunit.

In terms of biological role, this protein binds to the 23S rRNA, and is important in its secondary structure. It is located near the subunit interface in the base of the L7/L12 stalk, and near the tRNA binding site of the peptidyltransferase center. This chain is Large ribosomal subunit protein uL6, found in Fructilactobacillus sanfranciscensis (Lactobacillus sanfranciscensis).